The sequence spans 456 residues: Bifunctional protein GlmU (456 aa).

Residues 1–228 (MKLKAIILAA…YEDIMAVNSR (228 aa)) are pyrophosphorylase. UDP-N-acetyl-alpha-D-glucosamine is bound by residues 8–11 (LAAG), Lys22, Gln72, 77–78 (GT), 99–101 (YGD), Gly138, Glu153, Asn168, and Asn226. Asp101 is a binding site for Mg(2+). A Mg(2+)-binding site is contributed by Asn226. Residues 229–249 (EQLAEVEEVMQRRIVKKHMEA) form a linker region. Residues 250 to 456 (GVTFIDPQST…WVARKGVGKK (207 aa)) form an N-acetyltransferase region. Residues Arg331 and Lys349 each coordinate UDP-N-acetyl-alpha-D-glucosamine. His361 functions as the Proton acceptor in the catalytic mechanism. UDP-N-acetyl-alpha-D-glucosamine-binding residues include Tyr364 and Asn375. Acetyl-CoA-binding positions include 384-385 (NY), Ser403, Ser421, and Arg438.

This sequence in the N-terminal section; belongs to the N-acetylglucosamine-1-phosphate uridyltransferase family. It in the C-terminal section; belongs to the transferase hexapeptide repeat family. Homotrimer. Requires Mg(2+) as cofactor.

Its subcellular location is the cytoplasm. It catalyses the reaction alpha-D-glucosamine 1-phosphate + acetyl-CoA = N-acetyl-alpha-D-glucosamine 1-phosphate + CoA + H(+). The enzyme catalyses N-acetyl-alpha-D-glucosamine 1-phosphate + UTP + H(+) = UDP-N-acetyl-alpha-D-glucosamine + diphosphate. It participates in nucleotide-sugar biosynthesis; UDP-N-acetyl-alpha-D-glucosamine biosynthesis; N-acetyl-alpha-D-glucosamine 1-phosphate from alpha-D-glucosamine 6-phosphate (route II): step 2/2. Its pathway is nucleotide-sugar biosynthesis; UDP-N-acetyl-alpha-D-glucosamine biosynthesis; UDP-N-acetyl-alpha-D-glucosamine from N-acetyl-alpha-D-glucosamine 1-phosphate: step 1/1. The protein operates within bacterial outer membrane biogenesis; LPS lipid A biosynthesis. Catalyzes the last two sequential reactions in the de novo biosynthetic pathway for UDP-N-acetylglucosamine (UDP-GlcNAc). The C-terminal domain catalyzes the transfer of acetyl group from acetyl coenzyme A to glucosamine-1-phosphate (GlcN-1-P) to produce N-acetylglucosamine-1-phosphate (GlcNAc-1-P), which is converted into UDP-GlcNAc by the transfer of uridine 5-monophosphate (from uridine 5-triphosphate), a reaction catalyzed by the N-terminal domain. This Alkaliphilus metalliredigens (strain QYMF) protein is Bifunctional protein GlmU.